A 363-amino-acid polypeptide reads, in one-letter code: Peptide chain release factor 2 (363 aa).

At Gln-251 the chain carries N5-methylglutamine.

It belongs to the prokaryotic/mitochondrial release factor family. Methylated by PrmC. Methylation increases the termination efficiency of RF2.

The protein localises to the cytoplasm. Functionally, peptide chain release factor 2 directs the termination of translation in response to the peptide chain termination codons UGA and UAA. In Helicobacter pylori (strain HPAG1), this protein is Peptide chain release factor 2.